Here is a 380-residue protein sequence, read N- to C-terminus: Cytochrome b (380 aa).

Transmembrane regions (helical) follow at residues 33 to 53, 77 to 98, 113 to 133, and 178 to 198; these read FGSL…FLAM, WFIR…YIHV, WNVG…GYVL, and FFAF…VHLL. The heme b site is built by H83 and H97. Heme b contacts are provided by H182 and H196. An a ubiquinone-binding site is contributed by H201. 4 helical membrane passes run 226 to 246, 288 to 308, 320 to 340, and 347 to 367; these read TKDI…VLFA, LGGV…PYLY, LTQL…WIGA, and FITI…ILMP.

This sequence belongs to the cytochrome b family. In terms of assembly, the cytochrome bc1 complex contains 11 subunits: 3 respiratory subunits (MT-CYB, CYC1 and UQCRFS1), 2 core proteins (UQCRC1 and UQCRC2) and 6 low-molecular weight proteins (UQCRH/QCR6, UQCRB/QCR7, UQCRQ/QCR8, UQCR10/QCR9, UQCR11/QCR10 and a cleavage product of UQCRFS1). This cytochrome bc1 complex then forms a dimer. Heme b serves as cofactor.

The protein resides in the mitochondrion inner membrane. Component of the ubiquinol-cytochrome c reductase complex (complex III or cytochrome b-c1 complex) that is part of the mitochondrial respiratory chain. The b-c1 complex mediates electron transfer from ubiquinol to cytochrome c. Contributes to the generation of a proton gradient across the mitochondrial membrane that is then used for ATP synthesis. In Cricetomys emini (Emin's giant pouched rat), this protein is Cytochrome b (MT-CYB).